We begin with the raw amino-acid sequence, 381 residues long: Probable tRNA sulfurtransferase (381 aa).

Residues 57 to 160 (EKGIEKLKSV…NKAYVYSKKI (104 aa)) enclose the THUMP domain. ATP-binding positions include 177–178 (ML), 202–203 (YF), arginine 259, glycine 281, and glutamine 290.

Belongs to the ThiI family.

It is found in the cytoplasm. The catalysed reaction is [ThiI sulfur-carrier protein]-S-sulfanyl-L-cysteine + a uridine in tRNA + 2 reduced [2Fe-2S]-[ferredoxin] + ATP + H(+) = [ThiI sulfur-carrier protein]-L-cysteine + a 4-thiouridine in tRNA + 2 oxidized [2Fe-2S]-[ferredoxin] + AMP + diphosphate. The enzyme catalyses [ThiS sulfur-carrier protein]-C-terminal Gly-Gly-AMP + S-sulfanyl-L-cysteinyl-[cysteine desulfurase] + AH2 = [ThiS sulfur-carrier protein]-C-terminal-Gly-aminoethanethioate + L-cysteinyl-[cysteine desulfurase] + A + AMP + 2 H(+). It functions in the pathway cofactor biosynthesis; thiamine diphosphate biosynthesis. Its function is as follows. Catalyzes the ATP-dependent transfer of a sulfur to tRNA to produce 4-thiouridine in position 8 of tRNAs, which functions as a near-UV photosensor. Also catalyzes the transfer of sulfur to the sulfur carrier protein ThiS, forming ThiS-thiocarboxylate. This is a step in the synthesis of thiazole, in the thiamine biosynthesis pathway. The sulfur is donated as persulfide by IscS. The protein is Probable tRNA sulfurtransferase of Clostridium kluyveri (strain NBRC 12016).